The sequence spans 370 residues: MRVGLVGWRGMVGSVLMQRMVEERDFDLIEPVFFSTSQIGVPAPNFGKDAGMLHDAFDIESLKQLDAVITCQGGSYTEKVYPALRQAGWKGYWIDAASTLRMDKEAIITLDPVNLKQILHGIHHGTKTFVGGNCTVSLMLMALGGLYERGLVEWMSAMTYQAASGAGAQNMRELISQMGVINDAVSSELANPASSILDIDKKVAETMRSGSFPTDNFGVPLAGSLIPWIDVKRDNGQSKEEWKAGVEANKILGLQDSPVPIDGTCVRIGAMRCHSQALTIKLKQNIPLDEIEEMIATHNDWVKVIPNERDITARELTPAKVTGTLSVPVGRLRKMAMGDDFLNAFTVGDQLLWGAAEPLRRTLRIILAEK.

Residues 9–12 (RGMV), 36–37 (TS), and Gln-72 each bind NADP(+). Position 101 (Arg-101) interacts with phosphate. Cys-134 acts as the Acyl-thioester intermediate in catalysis. An S-cysteinyl cysteine; in inhibited form modification is found at Cys-134. Residue Gln-161 participates in substrate binding. NADP(+) is bound by residues 164–165 (SG) and Pro-192. Position 240 (Glu-240) interacts with substrate. Residue Lys-243 coordinates phosphate. A substrate-binding site is contributed by Arg-267. His-274 (proton acceptor) is an active-site residue. Gln-350 is a binding site for NADP(+).

The protein belongs to the aspartate-semialdehyde dehydrogenase family. As to quaternary structure, homodimer.

It carries out the reaction L-aspartate 4-semialdehyde + phosphate + NADP(+) = 4-phospho-L-aspartate + NADPH + H(+). The protein operates within amino-acid biosynthesis; L-lysine biosynthesis via DAP pathway; (S)-tetrahydrodipicolinate from L-aspartate: step 2/4. Its pathway is amino-acid biosynthesis; L-methionine biosynthesis via de novo pathway; L-homoserine from L-aspartate: step 2/3. It functions in the pathway amino-acid biosynthesis; L-threonine biosynthesis; L-threonine from L-aspartate: step 2/5. Its activity is regulated as follows. Inhibited by S-methyl-L-cysteine sulfoxide in vitro, via the formation of a covalently bound cysteine at the active site Cys-134. Functionally, catalyzes the NADPH-dependent formation of L-aspartate-semialdehyde (L-ASA) by the reductive dephosphorylation of L-aspartyl-4-phosphate. This Vibrio cholerae serotype O1 (strain ATCC 39315 / El Tor Inaba N16961) protein is Aspartate-semialdehyde dehydrogenase 1 (asd1).